Consider the following 234-residue polypeptide: uncharacterized protein (234 aa).

Helical transmembrane passes span 25–45 (LMGA…TFFL), 57–77 (LFFL…QGLA), 85–105 (LPIF…TLLM), 108–128 (ATDI…LSVY), 142–162 (AFGV…FFAS), 163–183 (TGLT…LIAW), and 203–223 (WAIS…LFLL).

It belongs to the BI1 family.

The protein localises to the cell membrane. This is an uncharacterized protein from Lactococcus lactis subsp. lactis (strain IL1403) (Streptococcus lactis).